Reading from the N-terminus, the 66-residue chain is COP9 signalosome complex subunit 6a (66 aa).

The protein belongs to the peptidase M67A family. CSN6 subfamily. In terms of assembly, component of the CSN complex, probably composed of CSN1, CSN2, CSN3, CSN4, CSN5 (CSN5A or CSN5B), CSN6 (CSN6A or CSN6B), CSN7 and CSN8.

Its subcellular location is the cytoplasm. It is found in the nucleus. Component of the COP9 signalosome complex (CSN), a complex involved in various cellular and developmental processes such as photomorphogenesis and auxin and jasmonate responses. The CSN complex is an essential regulator of the ubiquitin (Ubl) conjugation pathway by mediating the deneddylation of the cullin subunits of SCF-type E3 ligase complexes, leading to decrease the Ubl ligase activity of SCF. It is involved in repression of photomorphogenesis in darkness by regulating the activity of COP1-containing Ubl ligase complexes. The chain is COP9 signalosome complex subunit 6a (CSN6A) from Brassica oleracea (Wild cabbage).